The chain runs to 111 residues: MADWARAQSPGAVEEILDRENKRMADSLASKVTRLKSLALDIDRDAEDQNRYLDGMDSDFTSMTGLLTGSVKRFSTMARSGRDNRKLLCGVAVGLIVAFFILSYLLSRART.

The Cytoplasmic portion of the chain corresponds to 1 to 86 (MADWARAQSP…MARSGRDNRK (86 aa)). Phosphoserine is present on residues Ser-9 and Ser-37. The 63-residue stretch at 15–77 (EILDRENKRM…TGSVKRFSTM (63 aa)) folds into the t-SNARE coiled-coil homology domain. Residues 87 to 107 (LLCGVAVGLIVAFFILSYLLS) form a helical; Anchor for type IV membrane protein membrane-spanning segment. Residues 108 to 111 (RART) are Lumenal-facing.

Component of a SNARE complex consisting of STX5, YKT6, GOSR1 and BET1L. Interacts with STX5.

The protein localises to the golgi apparatus membrane. It is found in the golgi apparatus. Its subcellular location is the trans-Golgi network membrane. Its function is as follows. Vesicle SNARE required for targeting and fusion of retrograde transport vesicles with the Golgi complex. Required for the integrity of the Golgi complex. The chain is BET1-like protein from Bos taurus (Bovine).